A 154-amino-acid chain; its full sequence is Transcriptional repressor NrdR (154 aa).

The segment at 3-34 (CPFCGAHDTKVIDSRLVAEGDQVRRRRECLAC) is a zinc-finger region. The region spanning 49 to 139 (PRLIKQDGSR…VYRRFQDLNE (91 aa)) is the ATP-cone domain.

It belongs to the NrdR family. It depends on Zn(2+) as a cofactor.

In terms of biological role, negatively regulates transcription of bacterial ribonucleotide reductase nrd genes and operons by binding to NrdR-boxes. The polypeptide is Transcriptional repressor NrdR (Pseudomonas aeruginosa (strain LESB58)).